A 109-amino-acid chain; its full sequence is FK506-binding protein (109 aa).

Residues 20 to 108 (GKEITVHYTG…IFEVELLKVY (89 aa)) enclose the PPIase FKBP-type domain.

Belongs to the FKBP-type PPIase family.

The catalysed reaction is [protein]-peptidylproline (omega=180) = [protein]-peptidylproline (omega=0). Functionally, PPIases accelerate the folding of proteins. The polypeptide is FK506-binding protein (fbp) (Neisseria meningitidis serogroup C).